The following is a 318-amino-acid chain: L-malyl-CoA/beta-methylmalyl-CoA lyase (318 aa).

Residues Phe-19, Arg-24, Lys-30, and Arg-76 each coordinate substrate. 2 residues coordinate Mg(2+): Glu-141 and Asp-168. Substrate is bound by residues 167–168 (AD) and 251–252 (IH).

Belongs to the HpcH/HpaI aldolase family. As to quaternary structure, homohexamer. Dimer of trimers. Mg(2+) serves as cofactor. It depends on Mn(2+) as a cofactor.

It catalyses the reaction (S)-malyl-CoA = glyoxylate + acetyl-CoA. The catalysed reaction is (2R,3S)-beta-methylmalyl-CoA = propanoyl-CoA + glyoxylate. In terms of biological role, involved in the ethylmalonyl-CoA pathway for acetate assimilation. Catalyzes the reversible condensation of glyoxylate and acetyl-CoA to L-malyl-CoA and the reversible condensation of glyoxylate and propionyl-CoA to yield beta-methylmalyl-CoA. In Cereibacter sphaeroides (strain ATCC 17025 / ATH 2.4.3) (Rhodobacter sphaeroides), this protein is L-malyl-CoA/beta-methylmalyl-CoA lyase.